The following is a 386-amino-acid chain: Aspergillopepsin-1 (386 aa).

The signal sequence occupies residues 1–20 (MVVFSKVAAAAFGLSAVASA). The propeptide at 21 to 69 (MPAAPPRQGFTINQLTRAIPKRTINLPAIYANALSKYGGNVPPHIQDAM) is activation peptide. Residues 85-383 (YLTPVAVGGT…DSEGPQLGFA (299 aa)) enclose the Peptidase A1 domain. Residue Asp-101 is part of the active site. Asn-130 carries N-linked (GlcNAc...) asparagine glycosylation. Asp-275 is an active-site residue. Cys-311 and Cys-346 form a disulfide bridge.

The protein belongs to the peptidase A1 family. As to quaternary structure, monomer.

The protein resides in the secreted. The catalysed reaction is Hydrolysis of proteins with broad specificity. Generally favors hydrophobic residues in P1 and P1', but also accepts Lys in P1, which leads to activation of trypsinogen. Does not clot milk.. In terms of biological role, secreted aspartic endopeptidase that allows assimilation of proteinaceous substrates. The scissile peptide bond is attacked by a nucleophilic water molecule activated by two aspartic residues in the active site. Shows a broad primary substrate specificity. Favors hydrophobic residues at the P1 and P1' positions, but also accepts a lysine residue in the P1 position, leading to the activation of trypsinogen and chymotrypsinogen A. In Emericella nidulans (strain FGSC A4 / ATCC 38163 / CBS 112.46 / NRRL 194 / M139) (Aspergillus nidulans), this protein is Aspergillopepsin-1.